The following is a 367-amino-acid chain: Alanine racemase (367 aa).

Lys40 serves as the catalytic Proton acceptor; specific for D-alanine. Lys40 is subject to N6-(pyridoxal phosphate)lysine. Arg136 contributes to the substrate binding site. Tyr263 acts as the Proton acceptor; specific for L-alanine in catalysis. A substrate-binding site is contributed by Met310.

Belongs to the alanine racemase family. Pyridoxal 5'-phosphate is required as a cofactor.

The catalysed reaction is L-alanine = D-alanine. The protein operates within amino-acid biosynthesis; D-alanine biosynthesis; D-alanine from L-alanine: step 1/1. Functionally, catalyzes the interconversion of L-alanine and D-alanine. May also act on other amino acids. This chain is Alanine racemase (alr), found in Streptococcus thermophilus (strain ATCC BAA-250 / LMG 18311).